The sequence spans 218 residues: MNAAKVETSSMGMLQRADLTAADCLQEGEMGKKIQGKCFRIISTVSPVKLYCCYGVIMVLTVAVIALSVALSVRNKIPAMEDREPCYTACPSGWIGFGSKCFYFSEDMGNWTFSQSSCVASNSHLALFHSLEELNFLKRYKGTSDHWIGLHRASTQHPWIWTDNTEYSNLVLTRGGGECGFLSDNGISSGRSYTHRKWICSKFVSSCKSRVGSVPRHV.

Over 1–52 (MNAAKVETSSMGMLQRADLTAADCLQEGEMGKKIQGKCFRIISTVSPVKLYC) the chain is Cytoplasmic. The chain crosses the membrane as a helical; Signal-anchor for type II membrane protein span at residues 53 to 73 (CYGVIMVLTVAVIALSVALSV). Residues 74–218 (RNKIPAMEDR…SRVGSVPRHV (145 aa)) lie on the Extracellular side of the membrane. A disulfide bridge connects residues cysteine 90 and cysteine 101. The C-type lectin domain occupies 97–201 (FGSKCFYFSE…SYTHRKWICS (105 aa)). N-linked (GlcNAc...) asparagine glycosylation occurs at asparagine 110. A disulfide bridge links cysteine 118 with cysteine 200.

Detected in ileum, liver, kidney and in IL2-activated natural killer cells.

It is found in the cell membrane. Its function is as follows. Lectin-type cell surface receptor. This chain is C-type lectin domain family 2 member H (Clec2h), found in Mus musculus (Mouse).